The sequence spans 600 residues: MVNNMTDLTAQEPAWQTRDHLDDPVIGELRNRFGPDAFTVQATRTGVPVVWIKREQLLEVGDFLKKLPKPYVMLFDLHGMDERLRTHREGLPAADFSVFYHLISIDRNRDIMLKVALAENDLHVPTFTKLFPNANWYERETWDLFGITFDGHPNLRRIMMPQTWKGHPLRKDYPARATEFSPFELTKAKQDLEMEALTFKPEEWGMKRGTENEDFMFLNLGPNHPSAHGAFRIVLQLDGEEIVDCVPDIGYHHRGAEKMGERQSWHSYIPYTDRIEYLGGCVNEMPYVLAVEKLAGITVPDRVNVIRVMLSELFRINSHLLYISTFIQDVGAMTPVFFAFTDRQKIYDLVEAITGFRMHPAWFRIGGVAHDLPRGWDRLLREFLDWMPKRLASYEKAALQNTILKGRSQGVAAYGAKEALEWGTTGAGLRATGIDFDVRKARPYSGYENFDFEIPVGGGVSDCYTRVMLKVEELRQSLRILEQCLNNMPEGPFKADHPLTTPPPKERTLQHIETLITHFLQVSWGPVMPANESFQMVEATKGINSYYLTSDGSTMSYRTRIRTPSYAHLQQIPAAIRGSLVSDLIVYLGSIDFVMSDVDR.

Positions 1–190 (MVNNMTDLTA…SPFELTKAKQ (190 aa)) are NADH dehydrogenase I subunit C. The interval 214 to 600 (DFMFLNLGPN…IDFVMSDVDR (387 aa)) is NADH dehydrogenase I subunit D.

In the N-terminal section; belongs to the complex I 30 kDa subunit family. The protein in the C-terminal section; belongs to the complex I 49 kDa subunit family. In terms of assembly, NDH-1 is composed of 13 different subunits. Subunits NuoB, CD, E, F, and G constitute the peripheral sector of the complex.

The protein localises to the cell inner membrane. It catalyses the reaction a quinone + NADH + 5 H(+)(in) = a quinol + NAD(+) + 4 H(+)(out). NDH-1 shuttles electrons from NADH, via FMN and iron-sulfur (Fe-S) centers, to quinones in the respiratory chain. The immediate electron acceptor for the enzyme in this species is believed to be ubiquinone. Couples the redox reaction to proton translocation (for every two electrons transferred, four hydrogen ions are translocated across the cytoplasmic membrane), and thus conserves the redox energy in a proton gradient. The chain is NADH-quinone oxidoreductase subunit C/D from Escherichia coli O6:H1 (strain CFT073 / ATCC 700928 / UPEC).